The primary structure comprises 160 residues: F-box protein At1g15015 (160 aa).

The F-box domain maps to 1–44 (MDVTLPHHVVEDILERLPVKTLRKFKCVCSTWRSTIDSQRFKDR).

The sequence is that of F-box protein At1g15015 from Arabidopsis thaliana (Mouse-ear cress).